The primary structure comprises 495 residues: Nitrogen fixation regulatory protein (495 aa).

One can recognise a PAS 1 domain in the interval His23 to Arg93. Residues Gln94–Asn148 enclose the PAC domain. The PAS 2; truncated domain occupies Thr151 to Val174.

Its function is as follows. Required for the inhibition of NifA activity in response to oxygen and low level of fixed nitrogen. The polypeptide is Nitrogen fixation regulatory protein (nifL) (Klebsiella oxytoca).